Reading from the N-terminus, the 144-residue chain is Peptide methionine sulfoxide reductase MsrB (144 aa).

One can recognise a MsrB domain in the interval 5 to 128 (QEELRQRIGH…NSAALDFIPY (124 aa)). Cysteine 117 serves as the catalytic Nucleophile.

It belongs to the MsrB Met sulfoxide reductase family.

It catalyses the reaction L-methionyl-[protein] + [thioredoxin]-disulfide + H2O = L-methionyl-(R)-S-oxide-[protein] + [thioredoxin]-dithiol. The chain is Peptide methionine sulfoxide reductase MsrB from Streptococcus agalactiae serotype Ia (strain ATCC 27591 / A909 / CDC SS700).